The sequence spans 117 residues: Large ribosomal subunit protein bL20 (117 aa).

This sequence belongs to the bacterial ribosomal protein bL20 family.

Binds directly to 23S ribosomal RNA and is necessary for the in vitro assembly process of the 50S ribosomal subunit. It is not involved in the protein synthesizing functions of that subunit. This is Large ribosomal subunit protein bL20 from Rickettsia rickettsii (strain Iowa).